A 430-amino-acid polypeptide reads, in one-letter code: Histidine--tRNA ligase (430 aa).

It belongs to the class-II aminoacyl-tRNA synthetase family. As to quaternary structure, homodimer.

It localises to the cytoplasm. The enzyme catalyses tRNA(His) + L-histidine + ATP = L-histidyl-tRNA(His) + AMP + diphosphate + H(+). In Parasynechococcus marenigrum (strain WH8102), this protein is Histidine--tRNA ligase.